We begin with the raw amino-acid sequence, 189 residues long: Interferon alpha-1 (189 aa).

Positions 1 to 23 are cleaved as a signal peptide; it reads MARLCAFLMVLAVLSYWPTCSLG. Disulfide bonds link cysteine 24–cysteine 122 and cysteine 52–cysteine 162. Asparagine 101 carries an N-linked (GlcNAc...) asparagine glycan.

It belongs to the alpha/beta interferon family. In terms of assembly, interacts with CR2. In terms of processing, glycosylated.

It localises to the secreted. In terms of biological role, produced by macrophages, IFN-alpha have antiviral activities. Interferon stimulates the production of two enzymes: a protein kinase and an oligoadenylate synthetase. This Mus musculus (Mouse) protein is Interferon alpha-1 (Ifna1).